We begin with the raw amino-acid sequence, 782 residues long: General transcription and DNA repair factor IIH helicase/translocase subunit XPB (782 aa).

Basic and acidic residues predominate over residues 1-11 (MGKRDRADRDK). Disordered regions lie at residues 1-51 (MGKR…ESGT) and 218-241 (SAIS…PQGK). Residues 6-18 (RADRDKKKSRKRH) carry the Nuclear localization signal motif. The span at 21–30 (DEEDDEEDAP) shows a compositional bias: acidic residues. The span at 218-236 (SAISKTAESSGGPSTSRVT) shows a compositional bias: polar residues. The Helicase ATP-binding domain occupies 327 to 488 (MFGNGRARSG…DLNFLIGPKL (162 aa)). 340 to 347 (LPCGAGKS) provides a ligand contact to ATP. The short motif at 441-444 (DEVH) is the DEVH box element. In terms of domain architecture, Helicase C-terminal spans 542-702 (RACQFLIKFH…LAGMEEEDLA (161 aa)). Positions 642 and 645 each coordinate ATP. Serine 686 carries the post-translational modification Phosphoserine. Phosphoserine; by CK2 is present on serine 751.

This sequence belongs to the helicase family. RAD25/XPB subfamily. Component of the 7-subunit TFIIH core complex composed of XPB/ERCC3, XPD/ERCC2, GTF2H1, GTF2H2, GTF2H3, GTF2H4 and GTF2H5, which is active in NER. The core complex associates with the 3-subunit CDK-activating kinase (CAK) module composed of CCNH/cyclin H, CDK7 and MNAT1 to form the 10-subunit holoenzyme (holo-TFIIH) active in transcription. Interacts with PUF60. Interacts with ATF7IP. Interacts with KAT2A; leading to KAT2A recruitment to promoters and acetylation of histones. Part of TBP-based Pol II pre-initiation complex (PIC), in which Pol II core assembles with general transcription factors and other specific initiation factors including GTF2E1, GTF2E2, GTF2F1, GTF2F2, TCEA1, ERCC2, ERCC3, GTF2H2, GTF2H3, GTF2H4, GTF2H5, GTF2A1, GTF2A2, GTF2B and TBP; this large multi-subunit PIC complex mediates DNA unwinding and targets Pol II core to the transcription start site where the first phosphodiester bond forms. In terms of assembly, (Microbial infection) Interacts with Epstein-Barr virus EBNA2. Post-translationally, phosphorylation on Ser-751 by CK2 controls the 5'-excision activity of ERCC1-XPF endonuclease; phosphorylated protein inhibits the excision activity and thus NER. Dephosphorylation reactivates the 5'-excision step. Phosphorylation has no effect on transcription or the 3'-5' helicase activity.

Its subcellular location is the nucleus. It carries out the reaction Couples ATP hydrolysis with the unwinding of duplex DNA by translocating in the 3'-5' direction.. It catalyses the reaction ATP + H2O = ADP + phosphate + H(+). Phosphorylation on Ser-751 by CK2 controls the 5'-excision activity of ERCC1-XPF endonuclease; phosphorylated protein inhibits the excision activity and thus NER. ATPase activity is stimulated by TFIIH subunit p52 (GTF2H4). DNA translocase activity by this subunit in TFIIH is stimulated by XPA, ERCC5/XPG and XFP plus ERCC1; translocase activity is sensitive to triptolide which targets this enzyme. Functionally, ATP-dependent 3'-5' DNA helicase/translocase. Binds dsDNA rather than ssDNA, unzipping it in a translocase rather than classical helicase activity. Component of the general transcription and DNA repair factor IIH (TFIIH) core complex. When complexed to CDK-activating kinase (CAK), involved in RNA transcription by RNA polymerase II. The ATPase activity of XPB/ERCC3, but not its helicase activity, is required for DNA opening; it may wrap around the damaged DNA wedging it open, causing localized melting that allows XPD/ERCC2 helicase to anchor. In transcription, TFIIH has an essential role in transcription initiation. When the pre-initiation complex (PIC) has been established, TFIIH is required for promoter opening and promoter escape. The ATP-dependent helicase activity of XPB/ERCC3 is required for promoter opening and promoter escape. In transcription pre-initiation complexes induces and propagates a DNA twist to open DNA. Also involved in transcription-coupled nucleotide excision repair (NER) of damaged DNA. In NER, TFIIH acts by opening DNA around the lesion to allow the excision of the damaged oligonucleotide and its replacement by a new DNA fragment. The structure of the TFIIH transcription complex differs from the NER-TFIIH complex; large movements by XPD/ERCC2 and XPB/ERCC3 are stabilized by XPA. XPA retains XPB/ERCC3 at the 5' end of a DNA bubble (mimicking DNA damage). The sequence is that of General transcription and DNA repair factor IIH helicase/translocase subunit XPB from Homo sapiens (Human).